The primary structure comprises 187 residues: Probable nicotinate-nucleotide adenylyltransferase (187 aa).

This sequence belongs to the NadD family.

It carries out the reaction nicotinate beta-D-ribonucleotide + ATP + H(+) = deamido-NAD(+) + diphosphate. Its pathway is cofactor biosynthesis; NAD(+) biosynthesis; deamido-NAD(+) from nicotinate D-ribonucleotide: step 1/1. Functionally, catalyzes the reversible adenylation of nicotinate mononucleotide (NaMN) to nicotinic acid adenine dinucleotide (NaAD). The chain is Probable nicotinate-nucleotide adenylyltransferase from Agrobacterium fabrum (strain C58 / ATCC 33970) (Agrobacterium tumefaciens (strain C58)).